Consider the following 473-residue polypeptide: Argininosuccinate lyase (473 aa).

The 2-(N(omega)-L-arginino)succinate site is built by serine 34, asparagine 121, and threonine 166. Histidine 167 acts as the Proton acceptor in catalysis. Serine 289 (proton donor) is an active-site residue. 2-(N(omega)-L-arginino)succinate contacts are provided by asparagine 297, tyrosine 329, and glutamine 334.

It belongs to the lyase 1 family. Argininosuccinate lyase subfamily.

The enzyme catalyses 2-(N(omega)-L-arginino)succinate = fumarate + L-arginine. Its pathway is amino-acid biosynthesis; L-arginine biosynthesis; L-arginine from L-ornithine and carbamoyl phosphate: step 3/3. The polypeptide is Argininosuccinate lyase (ARG7) (Chlamydomonas reinhardtii (Chlamydomonas smithii)).